Here is a 526-residue protein sequence, read N- to C-terminus: NAD(P)H-quinone oxidoreductase chain 4 (526 aa).

Transmembrane regions (helical) follow at residues 5 to 25, 32 to 52, 87 to 107, 111 to 131, 133 to 153, 165 to 185, 211 to 231, 239 to 259, 273 to 293, 302 to 320, 331 to 351, 371 to 393, and 414 to 434; these read FPWL…VPLI, WYSF…FFTS, LILL…PVTL, MFHF…AVQD, VLFF…LAIW, FILY…AMYF, FLGL…HTWL, TAPV…YALI, FAPL…LTSF, IAYS…VGSL, QMIS…ATYD, IFAM…GFVA, and LVVL…LSML.

Belongs to the complex I subunit 4 family.

It is found in the cell inner membrane. The enzyme catalyses a plastoquinone + NADH + (n+1) H(+)(in) = a plastoquinol + NAD(+) + n H(+)(out). It carries out the reaction a plastoquinone + NADPH + (n+1) H(+)(in) = a plastoquinol + NADP(+) + n H(+)(out). In terms of biological role, NDH-1 shuttles electrons from NAD(P)H, via FMN and iron-sulfur (Fe-S) centers, to quinones in the respiratory chain. The immediate electron acceptor for the enzyme in this species is believed to be plastoquinone. Couples the redox reaction to proton translocation (for every two electrons transferred, four hydrogen ions are translocated across the cytoplasmic membrane), and thus conserves the redox energy in a proton gradient. This Gloeobacter violaceus (strain ATCC 29082 / PCC 7421) protein is NAD(P)H-quinone oxidoreductase chain 4.